The sequence spans 319 residues: Ribose-phosphate pyrophosphokinase (319 aa).

Residues 41–43 (NGE) and 100–101 (RQ) contribute to the ATP site. Mg(2+)-binding residues include His-134 and Asp-175. The active site involves Lys-198. D-ribose 5-phosphate is bound by residues Arg-200, Asp-224, and 228 to 232 (DTAGS).

This sequence belongs to the ribose-phosphate pyrophosphokinase family. Class I subfamily. Homohexamer. It depends on Mg(2+) as a cofactor.

The protein resides in the cytoplasm. It catalyses the reaction D-ribose 5-phosphate + ATP = 5-phospho-alpha-D-ribose 1-diphosphate + AMP + H(+). Its pathway is metabolic intermediate biosynthesis; 5-phospho-alpha-D-ribose 1-diphosphate biosynthesis; 5-phospho-alpha-D-ribose 1-diphosphate from D-ribose 5-phosphate (route I): step 1/1. In terms of biological role, involved in the biosynthesis of the central metabolite phospho-alpha-D-ribosyl-1-pyrophosphate (PRPP) via the transfer of pyrophosphoryl group from ATP to 1-hydroxyl of ribose-5-phosphate (Rib-5-P). This chain is Ribose-phosphate pyrophosphokinase, found in Clostridium acetobutylicum (strain ATCC 824 / DSM 792 / JCM 1419 / IAM 19013 / LMG 5710 / NBRC 13948 / NRRL B-527 / VKM B-1787 / 2291 / W).